A 144-amino-acid chain; its full sequence is Ninjurin-2 (144 aa).

Over 1–62 the chain is Extracellular; that stretch reads MESDREIIHL…KSVLEQGPFS (62 aa). A helix alpha1 region spans residues 27–39; sequence NHYATKKSVAESM. Residues 40–59 are helix alpha2; it reads LDVALFMSNAMRLKSVLEQG. A helical membrane pass occupies residues 63–94; it reads QYYTTLLTLISASLLLQVVIGILLVVIARLNL. At 95 to 98 the chain is on the cytoplasmic side; sequence NEVE. Residues 99–128 form a helical membrane-spanning segment; the sequence is NQWRLNQLNNAATTLVFITVVINIFITAFG. Gln-105 lines the cholesterol pocket. The Extracellular portion of the chain corresponds to 129–144; it reads AHKTGSVAARTSSNPI.

Belongs to the ninjurin family. As to quaternary structure, homooligomer; in response to stimuli, homooligomerizes into filaments. In contrast to NINJ1, the filament is curved toward the intracellular space, preventing its circularization on a relatively flat membrane to mediate plasma membrane rupture: curvature is caused by cholesterol-binding at the cytoplasmic leaflet.

It localises to the cell membrane. Its function is as follows. Its role in unclear. In contrast to NINJ1 paralog, does not mediate plasma membrane rupture (cytolysis) downstream of necroptotic and pyroptotic programmed cell death. While it is able to oligomerize and form filaments, filaments are curved toward the intracellular space, preventing circularization to mediate plasma membrane rupture. May act as a homophilic transmembrane adhesion molecule involved in nerve regeneration. Promotes axonal growth. This chain is Ninjurin-2 (Ninj2), found in Rattus norvegicus (Rat).